A 159-amino-acid polypeptide reads, in one-letter code: Ornithine decarboxylase antizyme (159 aa).

Belongs to the ODC antizyme family. In terms of assembly, interacts with ODC1 and thereby sterically blocks ODC homodimerization.

Ornithine decarboxylase (ODC) antizyme protein that negatively regulates ODC activity and intracellular polyamine biosynthesis and uptake in response to increased intracellular polyamine levels. Binds to ODC monomers, inhibiting the assembly of the functional ODC homodimer, and targets the monomers for ubiquitin-independent proteolytic destruction by the 26S proteasome. The polypeptide is Ornithine decarboxylase antizyme (Caenorhabditis elegans).